Reading from the N-terminus, the 571-residue chain is Hemagglutinin-neuraminidase (571 aa).

At 1 to 26 (MDRAVGRVALENEEREAKNTWRFVFR) the chain is on the intravirion side. Residues 27 to 47 (IAIFLLIVITLAISAAALVYS) traverse the membrane as a helical segment. The Virion surface portion of the chain corresponds to 48–571 (MEASTPGDLV…LVEILKEDGV (524 aa)). An N-linked (GlcNAc...) asparagine; by host glycan is attached at N119. The interval 124–152 (GAPVHDPDYIGGIGKELIVDDASDVTSFY) is important for interaction with fusion/F protein. Disulfide bonds link C172–C196, C186–C247, and C238–C251. An involved in neuraminidase activity region spans residues 234 to 239 (NRKSCS). Residues N341 and N433 are each glycosylated (N-linked (GlcNAc...) asparagine; by host). Intrachain disulfides connect C344/C461 and C455/C465. N481, N508, and N538 each carry an N-linked (GlcNAc...) asparagine; by host glycan. A disulfide bridge connects residues C531 and C542.

It belongs to the paramyxoviruses hemagglutinin-neuraminidase family. As to quaternary structure, homotetramer; composed of disulfide-linked homodimers. Interacts with F protein trimer. Interacts with host CG-1B; this interaction inhibits viral adsorption and replication rather than internalization.

Its subcellular location is the virion membrane. It localises to the host cell membrane. It catalyses the reaction Hydrolysis of alpha-(2-&gt;3)-, alpha-(2-&gt;6)-, alpha-(2-&gt;8)- glycosidic linkages of terminal sialic acid residues in oligosaccharides, glycoproteins, glycolipids, colominic acid and synthetic substrates.. Functionally, mediates the viral entry into the host cell together with fusion/F protein. Attaches the virus to sialic acid-containing cell receptors and thereby initiates infection. Binding of HN protein to the receptor induces a conformational change that allows the F protein to trigger virion/cell membranes fusion. In terms of biological role, neuraminidase activity ensures the efficient spread of the virus by dissociating the mature virions from the neuraminic acid containing glycoproteins. In Gallus gallus (Chicken), this protein is Hemagglutinin-neuraminidase (HN).